The primary structure comprises 191 residues: Cell division protein SepF (191 aa).

Polar residues predominate over residues Glu156–Gly167. The segment at Glu156–Leu191 is disordered.

It belongs to the SepF family. In terms of assembly, homodimer. Interacts with FtsZ.

It localises to the cytoplasm. Cell division protein that is part of the divisome complex and is recruited early to the Z-ring. Probably stimulates Z-ring formation, perhaps through the cross-linking of FtsZ protofilaments. Its function overlaps with FtsA. The protein is Cell division protein SepF of Prochlorococcus marinus (strain NATL2A).